A 316-amino-acid chain; its full sequence is Ornithine carbamoyltransferase (316 aa).

Carbamoyl phosphate is bound by residues 57–60 (STRT), Gln84, Arg108, and 135–138 (HPCQ). L-ornithine-binding positions include Asn166, Asp230, and 234–235 (SM). Residues 269 to 270 (CL) and Arg297 each bind carbamoyl phosphate.

The protein belongs to the aspartate/ornithine carbamoyltransferase superfamily. OTCase family.

It is found in the cytoplasm. It catalyses the reaction carbamoyl phosphate + L-ornithine = L-citrulline + phosphate + H(+). Its pathway is amino-acid degradation; L-arginine degradation via ADI pathway; carbamoyl phosphate from L-arginine: step 2/2. Its function is as follows. Reversibly catalyzes the transfer of the carbamoyl group from carbamoyl phosphate (CP) to the N(epsilon) atom of ornithine (ORN) to produce L-citrulline. The protein is Ornithine carbamoyltransferase of Bacillus cereus (strain AH187).